Reading from the N-terminus, the 453-residue chain is MDRRIFGIENEYGVTCTFKGQRRLSPDEVARYLFRKVVSWGRSSNVFLRNGARLYLDVGSHPEYATPECDDVVELVTHDKAGERVLEGLLLDAEQRLHDEGIAGEIYLFKNNTDSAGNSYGCHENYLVSRAGEFSRLADVLIPFLVTRQIIVGAGKITQTPRGASYSVSQRAEHIWEGVSSATTRSRPIINTRDEPHADAEKYRRLHVIVGDSNMSETTTMLKVASCDLVLRMIEEGVVMRDLTMENPIRAIREISHDVTGRRKVRLANGREASALDIQQEYLTKARDFVDRRELSTPLIEQALDLWERGLKAVEADDLGLVDREIDWVIKWKLIERYRAKHGLPLGHPRIAQLDLAYHDIHRGRGLYYLLEKRGAVARVTTDLKIFEAKSVPPQTTRARLRGEFIRRAQERRRDFTVDWVHLKLNDQAQRTVLCKDPFRAHDERVQRLIDGM.

Glu-9 contributes to the Mg(2+) binding site. Residue Arg-53 coordinates ATP. Tyr-55 is a Mg(2+) binding site. Asp-57 acts as the Proton acceptor in catalysis. Glu-63 contributes to the Mg(2+) binding site. ATP contacts are provided by Thr-66 and Trp-420.

The protein belongs to the Pup ligase/Pup deamidase family. Pup-conjugating enzyme subfamily.

The enzyme catalyses ATP + [prokaryotic ubiquitin-like protein]-L-glutamate + [protein]-L-lysine = ADP + phosphate + N(6)-([prokaryotic ubiquitin-like protein]-gamma-L-glutamyl)-[protein]-L-lysine.. It participates in protein degradation; proteasomal Pup-dependent pathway. The protein operates within protein modification; protein pupylation. Catalyzes the covalent attachment of the prokaryotic ubiquitin-like protein modifier Pup to the proteasomal substrate proteins, thereby targeting them for proteasomal degradation. This tagging system is termed pupylation. The ligation reaction involves the side-chain carboxylate of the C-terminal glutamate of Pup and the side-chain amino group of a substrate lysine. The chain is Pup--protein ligase from Nocardioides sp. (strain ATCC BAA-499 / JS614).